A 1432-amino-acid polypeptide reads, in one-letter code: Gag-Pol polyprotein (1432 aa).

Gly2 is lipidated: N-myristoyl glycine; by host. Residues 7 to 31 (ILSGGKLDDWEKIRLRPGGKKKYRI) form an interaction with Gp41 region. The interval 8–43 (LSGGKLDDWEKIRLRPGGKKKYRIKHLVWASRELDR) is interaction with host CALM1. Positions 12–19 (KLDDWEKI) are interaction with host AP3D1. The segment at 14–33 (DDWEKIRLRPGGKKKYRIKH) is interaction with membrane phosphatidylinositol 4,5-bisphosphate and RNA. Positions 16-22 (WEKIRLR) match the Nuclear export signal motif. The Nuclear localization signal signature appears at 26–32 (KKKYRIK). Positions 73 to 77 (QEIKS) are interaction with membrane phosphatidylinositol 4,5-bisphosphate. A Phosphotyrosine; by host modification is found at Tyr132. The tract at residues 189–227 (NTIGGHQAAMQMLKDTINEEAAEWDRVHPVHAGPIAPGQ) is interaction with human PPIA/CYPA and NUP153. The tract at residues 277–363 (YSPVSILDIR…GGPGHKARVL (87 aa)) is dimerization/Multimerization of capsid protein p24. 2 consecutive CCHC-type zinc fingers follow at residues 389-406 (VKCF…NCRA) and 410-427 (KGCW…DCTE). A disordered region spans residues 443–483 (EARELSPEQTRANSPTSREPRARRGDPLPETGAEGQGTVSS). The span at 449 to 459 (PEQTRANSPTS) shows a compositional bias: polar residues. A compositionally biased stretch (basic and acidic residues) spans 460 to 469 (REPRARRGDP). A dimerization of protease region spans residues 486–490 (PQITL). The 70-residue stretch at 505–574 (REALLDTGAD…TPVNIIGRNM (70 aa)) folds into the Peptidase A2 domain. The active-site For protease activity; shared with dimeric partner is the Asp510. Dimerization of protease stretches follow at residues 534–540 (GIGGFIK) and 573–585 (NMLT…LNFP). Residues 628-818 (EGKISRVGPE…PPFLWMGYEL (191 aa)) form the Reverse transcriptase domain. Mg(2+) is bound by residues Asp694, Asp769, and Asp770. The RT 'primer grip' stretch occupies residues 811–819 (FLWMGYELH). Positions 982–998 (WETWWTDYWQATWIPEW) match the Tryptophan repeat motif motif. The RNase H type-1 domain maps to 1018–1141 (IMGAETFYVD…VDKLVSSGIR (124 aa)). The Mg(2+) site is built by Asp1027, Glu1062, Asp1082, and Asp1133. Residues 1147-1188 (DGIDKAQEDHEKYHSNWRAMASDFNLPPVVAKEIVASCDKCQ) form an Integrase-type zinc finger. Positions 1156, 1160, 1184, and 1187 each coordinate Zn(2+). The 151-residue stretch at 1198–1348 (VDCSPGIWQL…SAGERIIDII (151 aa)) folds into the Integrase catalytic domain. 3 residues coordinate Mg(2+): Asp1208, Asp1260, and Glu1296. Residues 1367–1414 (FRVYYRDSRDPIWKGPAKLPWKGEGAVVIQDNSEIKVVPRRKAKIIRD) constitute a DNA-binding region (integrase-type).

In terms of assembly, homotrimer; further assembles as hexamers of trimers. Interacts with gp41 (via C-terminus). Interacts with host CALM1; this interaction induces a conformational change in the Matrix protein, triggering exposure of the myristate group. Interacts with host AP3D1; this interaction allows the polyprotein trafficking to multivesicular bodies during virus assembly. Part of the pre-integration complex (PIC) which is composed of viral genome, matrix protein, Vpr and integrase. As to quaternary structure, homodimer; the homodimer further multimerizes as homohexamers or homopentamers. Interacts with human PPIA/CYPA; This interaction stabilizes the capsid. Interacts with human NUP153. Interacts with host PDZD8; this interaction stabilizes the capsid. Interacts with monkey TRIM5; this interaction destabilizes the capsid. Homodimer, whose active site consists of two apposed aspartic acid residues. In terms of assembly, heterodimer of p66 RT and p51 RT (RT p66/p51). Heterodimerization of RT is essential for DNA polymerase activity. The overall folding of the subdomains is similar in p66 RT and p51 RT but the spatial arrangements of the subdomains are dramatically different. As to quaternary structure, homotetramer; may further associate as a homohexadecamer. Part of the pre-integration complex (PIC) which is composed of viral genome, matrix protein, Vpr and integrase. Interacts with human SMARCB1/INI1 and human PSIP1/LEDGF isoform 1. Interacts with human KPNA3; this interaction might play a role in nuclear import of the pre-integration complex. Interacts with human NUP153; this interaction might play a role in nuclear import of the pre-integration complex. Requires Mg(2+) as cofactor. In terms of processing, specific enzymatic cleavages by the viral protease yield mature proteins. The protease is released by autocatalytic cleavage. The polyprotein is cleaved during and after budding, this process is termed maturation. Proteolytic cleavage of p66 RT removes the RNase H domain to yield the p51 RT subunit. Nucleocapsid protein p7 might be further cleaved after virus entry. Tyrosine phosphorylated presumably in the virion by a host kinase. Phosphorylation is apparently not a major regulator of membrane association. Post-translationally, phosphorylated possibly by host MAPK1; this phosphorylation is necessary for Pin1-mediated virion uncoating. In terms of processing, methylated by host PRMT6, impairing its function by reducing RNA annealing and the initiation of reverse transcription.

It is found in the host cell membrane. Its subcellular location is the host endosome. The protein resides in the host multivesicular body. The protein localises to the virion membrane. It localises to the host nucleus. It is found in the host cytoplasm. Its subcellular location is the virion. It catalyses the reaction Specific for a P1 residue that is hydrophobic, and P1' variable, but often Pro.. The catalysed reaction is Endohydrolysis of RNA in RNA/DNA hybrids. Three different cleavage modes: 1. sequence-specific internal cleavage of RNA. Human immunodeficiency virus type 1 and Moloney murine leukemia virus enzymes prefer to cleave the RNA strand one nucleotide away from the RNA-DNA junction. 2. RNA 5'-end directed cleavage 13-19 nucleotides from the RNA end. 3. DNA 3'-end directed cleavage 15-20 nucleotides away from the primer terminus.. The enzyme catalyses 3'-end directed exonucleolytic cleavage of viral RNA-DNA hybrid.. It carries out the reaction DNA(n) + a 2'-deoxyribonucleoside 5'-triphosphate = DNA(n+1) + diphosphate. With respect to regulation, protease: The viral protease is inhibited by many synthetic protease inhibitors (PIs), such as amprenavir, atazanavir, indinavir, loprinavir, nelfinavir, ritonavir and saquinavir. Use of protease inhibitors in tritherapy regimens permit more ambitious therapeutic strategies. Reverse transcriptase/ribonuclease H: RT can be inhibited either by nucleoside RT inhibitors (NRTIs) or by non nucleoside RT inhibitors (NNRTIs). NRTIs act as chain terminators, whereas NNRTIs inhibit DNA polymerization by binding a small hydrophobic pocket near the RT active site and inducing an allosteric change in this region. Classical NRTIs are abacavir, adefovir (PMEA), didanosine (ddI), lamivudine (3TC), stavudine (d4T), tenofovir (PMPA), zalcitabine (ddC), and zidovudine (AZT). Classical NNRTIs are atevirdine (BHAP U-87201E), delavirdine, efavirenz (DMP-266), emivirine (I-EBU), and nevirapine (BI-RG-587). The tritherapies used as a basic effective treatment of AIDS associate two NRTIs and one NNRTI. Mediates, with Gag polyprotein, the essential events in virion assembly, including binding the plasma membrane, making the protein-protein interactions necessary to create spherical particles, recruiting the viral Env proteins, and packaging the genomic RNA via direct interactions with the RNA packaging sequence (Psi). Gag-Pol polyprotein may regulate its own translation, by the binding genomic RNA in the 5'-UTR. At low concentration, the polyprotein would promote translation, whereas at high concentration, the polyprotein would encapsidate genomic RNA and then shut off translation. In terms of biological role, targets the polyprotein to the plasma membrane via a multipartite membrane-binding signal, that includes its myristoylated N-terminus. Matrix protein is part of the pre-integration complex. Implicated in the release from host cell mediated by Vpu. Binds to RNA. Functionally, forms the conical core that encapsulates the genomic RNA-nucleocapsid complex in the virion. Most core are conical, with only 7% tubular. The core is constituted by capsid protein hexamer subunits. The core is disassembled soon after virion entry. Host restriction factors such as TRIM5-alpha or TRIMCyp bind retroviral capsids and cause premature capsid disassembly, leading to blocks in reverse transcription. Capsid restriction by TRIM5 is one of the factors which restricts HIV-1 to the human species. Host PIN1 apparently facilitates the virion uncoating. On the other hand, interactions with PDZD8 or CYPA stabilize the capsid. Its function is as follows. Encapsulates and protects viral dimeric unspliced genomic RNA (gRNA). Binds these RNAs through its zinc fingers. Acts as a nucleic acid chaperone which is involved in rearangement of nucleic acid secondary structure during gRNA retrotranscription. Also facilitates template switch leading to recombination. As part of the polyprotein, participates in gRNA dimerization, packaging, tRNA incorporation and virion assembly. Aspartyl protease that mediates proteolytic cleavages of Gag and Gag-Pol polyproteins during or shortly after the release of the virion from the plasma membrane. Cleavages take place as an ordered, step-wise cascade to yield mature proteins. This process is called maturation. Displays maximal activity during the budding process just prior to particle release from the cell. Also cleaves Nef and Vif, probably concomitantly with viral structural proteins on maturation of virus particles. Hydrolyzes host EIF4GI and PABP1 in order to shut off the capped cellular mRNA translation. The resulting inhibition of cellular protein synthesis serves to ensure maximal viral gene expression and to evade host immune response. Also mediates cleavage of host YTHDF3. Mediates cleavage of host CARD8, thereby activating the CARD8 inflammasome, leading to the clearance of latent HIV-1 in patient CD4(+) T-cells after viral reactivation; in contrast, HIV-1 can evade CARD8-sensing when its protease remains inactive in infected cells prior to viral budding. In terms of biological role, multifunctional enzyme that converts the viral RNA genome into dsDNA in the cytoplasm, shortly after virus entry into the cell. This enzyme displays a DNA polymerase activity that can copy either DNA or RNA templates, and a ribonuclease H (RNase H) activity that cleaves the RNA strand of RNA-DNA heteroduplexes in a partially processive 3' to 5' endonucleasic mode. Conversion of viral genomic RNA into dsDNA requires many steps. A tRNA(3)-Lys binds to the primer-binding site (PBS) situated at the 5'-end of the viral RNA. RT uses the 3' end of the tRNA primer to perform a short round of RNA-dependent minus-strand DNA synthesis. The reading proceeds through the U5 region and ends after the repeated (R) region which is present at both ends of viral RNA. The portion of the RNA-DNA heteroduplex is digested by the RNase H, resulting in a ssDNA product attached to the tRNA primer. This ssDNA/tRNA hybridizes with the identical R region situated at the 3' end of viral RNA. This template exchange, known as minus-strand DNA strong stop transfer, can be either intra- or intermolecular. RT uses the 3' end of this newly synthesized short ssDNA to perform the RNA-dependent minus-strand DNA synthesis of the whole template. RNase H digests the RNA template except for two polypurine tracts (PPTs) situated at the 5'-end and near the center of the genome. It is not clear if both polymerase and RNase H activities are simultaneous. RNase H probably can proceed both in a polymerase-dependent (RNA cut into small fragments by the same RT performing DNA synthesis) and a polymerase-independent mode (cleavage of remaining RNA fragments by free RTs). Secondly, RT performs DNA-directed plus-strand DNA synthesis using the PPTs that have not been removed by RNase H as primers. PPTs and tRNA primers are then removed by RNase H. The 3' and 5' ssDNA PBS regions hybridize to form a circular dsDNA intermediate. Strand displacement synthesis by RT to the PBS and PPT ends produces a blunt ended, linear dsDNA copy of the viral genome that includes long terminal repeats (LTRs) at both ends. Functionally, catalyzes viral DNA integration into the host chromosome, by performing a series of DNA cutting and joining reactions. This enzyme activity takes place after virion entry into a cell and reverse transcription of the RNA genome in dsDNA. The first step in the integration process is 3' processing. This step requires a complex comprising the viral genome, matrix protein, Vpr and integrase. This complex is called the pre-integration complex (PIC). The integrase protein removes 2 nucleotides from each 3' end of the viral DNA, leaving recessed CA OH's at the 3' ends. In the second step, the PIC enters cell nucleus. This process is mediated through integrase and Vpr proteins, and allows the virus to infect a non dividing cell. This ability to enter the nucleus is specific of lentiviruses, other retroviruses cannot and rely on cell division to access cell chromosomes. In the third step, termed strand transfer, the integrase protein joins the previously processed 3' ends to the 5' ends of strands of target cellular DNA at the site of integration. The 5'-ends are produced by integrase-catalyzed staggered cuts, 5 bp apart. A Y-shaped, gapped, recombination intermediate results, with the 5'-ends of the viral DNA strands and the 3' ends of target DNA strands remaining unjoined, flanking a gap of 5 bp. The last step is viral DNA integration into host chromosome. This involves host DNA repair synthesis in which the 5 bp gaps between the unjoined strands are filled in and then ligated. Since this process occurs at both cuts flanking the HIV genome, a 5 bp duplication of host DNA is produced at the ends of HIV-1 integration. Alternatively, Integrase may catalyze the excision of viral DNA just after strand transfer, this is termed disintegration. The protein is Gag-Pol polyprotein (gag-pol) of Human immunodeficiency virus type 1 group M subtype J (isolate SE9280) (HIV-1).